The primary structure comprises 174 residues: uncharacterized protein (174 aa).

2 consecutive transmembrane segments (helical) span residues 8–28 (FLFI…NYVF) and 146–166 (IVSW…IQFI).

Its subcellular location is the cell membrane. This is an uncharacterized protein from Haemophilus influenzae (strain ATCC 51907 / DSM 11121 / KW20 / Rd).